Here is a 188-residue protein sequence, read N- to C-terminus: Peptidyl-prolyl cis-trans isomerase (188 aa).

The signal sequence occupies residues 1–20 (MLKRVAIVLGGLLISAHALA). The PPIase cyclophilin-type domain maps to 21-181 (NTMVEMKTNL…QPVKIISVQI (161 aa)).

Belongs to the cyclophilin-type PPIase family.

It is found in the periplasm. The catalysed reaction is [protein]-peptidylproline (omega=180) = [protein]-peptidylproline (omega=0). Its function is as follows. PPIases accelerate the folding of proteins. It catalyzes the cis-trans isomerization of proline imidic peptide bonds in oligopeptides. This protein is not essential for growth. Presumably plays a role in signal transduction. The polypeptide is Peptidyl-prolyl cis-trans isomerase (rotA) (Acinetobacter baylyi (strain ATCC 33305 / BD413 / ADP1)).